A 47-amino-acid chain; its full sequence is KTCENLSGTFKGPCIPDGNCNKHCRNNEHLLSGRCRDDFRCWCTNRC.

Disulfide bonds link Cys3/Cys47, Cys14/Cys35, Cys20/Cys41, and Cys24/Cys43.

The protein belongs to the DEFL family. Epidermis and vascular bundles of pods, stems, roots, leaves and wet or dry seeds.

Possesses antifungal activity sensitive to inorganic cations. The polypeptide is Defensin-2 (Pisum sativum (Garden pea)).